A 213-amino-acid chain; its full sequence is Golgi SNAP receptor complex member 2 homolog memb-1 (213 aa).

The Cytoplasmic segment spans residues methionine 1 to aspartate 189. The chain crosses the membrane as a helical; Anchor for type IV membrane protein span at residues tryptophan 190–phenylalanine 210. The Vesicular segment spans residues tryptophan 211–glycine 213.

Belongs to the GOSR2 family. Part of a unique SNARE complex.

The protein resides in the golgi apparatus. The protein localises to the cis-Golgi network membrane. It is found in the golgi apparatus membrane. Its subcellular location is the endoplasmic reticulum membrane. In terms of biological role, involved in transport of proteins from the cis/medial-Golgi to the trans-Golgi network. In Caenorhabditis elegans, this protein is Golgi SNAP receptor complex member 2 homolog memb-1.